A 145-amino-acid chain; its full sequence is D-aminoacyl-tRNA deacylase (145 aa).

The Gly-cisPro motif, important for rejection of L-amino acids motif lies at 137-138; that stretch reads GP.

Belongs to the DTD family. As to quaternary structure, homodimer.

Its subcellular location is the cytoplasm. It catalyses the reaction glycyl-tRNA(Ala) + H2O = tRNA(Ala) + glycine + H(+). It carries out the reaction a D-aminoacyl-tRNA + H2O = a tRNA + a D-alpha-amino acid + H(+). Functionally, an aminoacyl-tRNA editing enzyme that deacylates mischarged D-aminoacyl-tRNAs. Also deacylates mischarged glycyl-tRNA(Ala), protecting cells against glycine mischarging by AlaRS. Acts via tRNA-based rather than protein-based catalysis; rejects L-amino acids rather than detecting D-amino acids in the active site. By recycling D-aminoacyl-tRNA to D-amino acids and free tRNA molecules, this enzyme counteracts the toxicity associated with the formation of D-aminoacyl-tRNA entities in vivo and helps enforce protein L-homochirality. The chain is D-aminoacyl-tRNA deacylase from Proteus mirabilis (strain HI4320).